Reading from the N-terminus, the 206-residue chain is Large ribosomal subunit protein mL62 (206 aa).

Residues 1–29 (MAAARCLRWGLSRAEAWLLPPPTSCCHRA) constitute a mitochondrion transit peptide. Gln-90 bears the N5-methylglutamine mark.

The protein belongs to the prokaryotic/mitochondrial release factor family. Mitochondrion-specific ribosomal protein mL62 subfamily. In terms of assembly, component of the mitochondrial ribosome large subunit (39S) which comprises a 16S rRNA and about 50 distinct proteins. Post-translationally, methylation of glutamine in the GGQ triplet by HEMK1.

It localises to the mitochondrion. The enzyme catalyses an N-acyl-L-alpha-aminoacyl-tRNA + H2O = an N-acyl-L-amino acid + a tRNA + H(+). Functionally, essential peptidyl-tRNA hydrolase component of the mitochondrial large ribosomal subunit. Acts as a codon-independent translation release factor that has lost all stop codon specificity and directs the termination of translation in mitochondrion, possibly in case of abortive elongation. May be involved in the hydrolysis of peptidyl-tRNAs that have been prematurely terminated and thus in the recycling of stalled mitochondrial ribosomes. The polypeptide is Large ribosomal subunit protein mL62 (Bos taurus (Bovine)).